The chain runs to 347 residues: Phosphoribosylformylglycinamidine cyclo-ligase (347 aa).

The protein belongs to the AIR synthase family.

Its subcellular location is the cytoplasm. The enzyme catalyses 2-formamido-N(1)-(5-O-phospho-beta-D-ribosyl)acetamidine + ATP = 5-amino-1-(5-phospho-beta-D-ribosyl)imidazole + ADP + phosphate + H(+). It functions in the pathway purine metabolism; IMP biosynthesis via de novo pathway; 5-amino-1-(5-phospho-D-ribosyl)imidazole from N(2)-formyl-N(1)-(5-phospho-D-ribosyl)glycinamide: step 2/2. The sequence is that of Phosphoribosylformylglycinamidine cyclo-ligase from Yersinia enterocolitica serotype O:8 / biotype 1B (strain NCTC 13174 / 8081).